Here is a 214-residue protein sequence, read N- to C-terminus: Adenylate kinase (214 aa).

Gly10 to Thr15 is a binding site for ATP. The interval Ser30–Val59 is NMP. Residues Thr31, Arg36, Lys57–Val59, Gly85–Arg88, and Gln92 each bind AMP. Positions Gly122 to Asp159 are LID. ATP-binding positions include Arg123 and Val132–Tyr133. Positions 156 and 167 each coordinate AMP. Lys200 contacts ATP.

This sequence belongs to the adenylate kinase family. In terms of assembly, monomer.

It localises to the cytoplasm. It carries out the reaction AMP + ATP = 2 ADP. It functions in the pathway purine metabolism; AMP biosynthesis via salvage pathway; AMP from ADP: step 1/1. In terms of biological role, catalyzes the reversible transfer of the terminal phosphate group between ATP and AMP. Plays an important role in cellular energy homeostasis and in adenine nucleotide metabolism. This is Adenylate kinase from Pseudoalteromonas atlantica (strain T6c / ATCC BAA-1087).